A 188-amino-acid polypeptide reads, in one-letter code: Xanthine phosphoribosyltransferase (188 aa).

Xanthine is bound by residues L20 and N27. 5-phospho-alpha-D-ribose 1-diphosphate is bound at residue 127–131 (ANGNA). Residue K155 coordinates xanthine.

The protein belongs to the purine/pyrimidine phosphoribosyltransferase family. Xpt subfamily. As to quaternary structure, homodimer.

It is found in the cytoplasm. It carries out the reaction XMP + diphosphate = xanthine + 5-phospho-alpha-D-ribose 1-diphosphate. It participates in purine metabolism; XMP biosynthesis via salvage pathway; XMP from xanthine: step 1/1. Converts the preformed base xanthine, a product of nucleic acid breakdown, to xanthosine 5'-monophosphate (XMP), so it can be reused for RNA or DNA synthesis. The polypeptide is Xanthine phosphoribosyltransferase (Phocaeicola vulgatus (strain ATCC 8482 / DSM 1447 / JCM 5826 / CCUG 4940 / NBRC 14291 / NCTC 11154) (Bacteroides vulgatus)).